Here is a 407-residue protein sequence, read N- to C-terminus: Aurora kinase A-A (407 aa).

The span at 1–10 shows a compositional bias: basic and acidic residues; it reads MERAVKENHK. The interval 1 to 130 is disordered; the sequence is MERAVKENHK…KTSAVPKEEG (130 aa). Polar residues-rich tracts occupy residues 67–77 and 84–110; these read ILSSQKPTTQI and QGHQ…STPN. The region spanning 140–390 is the Protein kinase domain; it reads FEIGRPLGKG…LKGVLEHPWI (251 aa). ATP-binding positions include lysine 150, lysine 169, and 217–220; that span reads LDYA. The active-site Proton acceptor is aspartate 263. Aspartate 281 is a binding site for ATP. The interval 287 to 300 is activation segment; the sequence is HAPSSRRTTLCGTL.

This sequence belongs to the protein kinase superfamily. Ser/Thr protein kinase family. Aurora subfamily. Interacts with kif2c and kif11. Phosphorylated. Autophosphorylated on a serine residue. Highly expressed in ovary and testis.

It is found in the cytoplasm. The protein resides in the cytoskeleton. The protein localises to the spindle. Its subcellular location is the microtubule organizing center. It localises to the centrosome. The catalysed reaction is L-seryl-[protein] + ATP = O-phospho-L-seryl-[protein] + ADP + H(+). It catalyses the reaction L-threonyl-[protein] + ATP = O-phospho-L-threonyl-[protein] + ADP + H(+). Functionally, mitotic serine/threonine kinases that contributes to the regulation of cell cycle progression. Associates with the centrosome and the spindle microtubules during mitosis and plays a critical role in various mitotic events including the establishment of mitotic spindle, centrosome duplication, centrosome separation as well as maturation, chromosomal alignment, spindle assembly checkpoint, and cytokinesis. Phosphorylates numerous target proteins. Important for microtubule formation and/or stabilization. This Xenopus laevis (African clawed frog) protein is Aurora kinase A-A (aurka-a).